The sequence spans 350 residues: MIQKMALDEFDSLGDKVIEGYQLTDNDLRTLLSLESKEGLERLYSAARKVRDHYFGNRVFLNCFIYFSTYCKNQCSFCYYNCRNEINRYRLTMEEIKETCKTLKGAGFHMVDLTMGEDPYYYEDPNRFVELVQIVKEELGLPIMISPGLMDNATLLKAREKGANFLALYQETYDTELYRKLRVGQSFDGRVNARRFAKQQGYCVEDGILTGVGNDIESTILSLRGMSTNDPDMVRVMTFLPQEGTPLEGFRDKSNLSELKIISVLRLMFPKRLIPASLDLEGIDGMVLRLNAGANIVTSILPPDSQLEGVANYDRDLEERDRDIKSVVRRLEIMGMKPARQADFEAVLGC.

The Radical SAM core domain occupies 57–279 (NRVFLNCFIY…PKRLIPASLD (223 aa)). Positions 71 and 75 each coordinate [4Fe-4S] cluster. F77 serves as a coordination point for S-adenosyl-L-methionine. C78 contacts [4Fe-4S] cluster. Residues D112, S146, and Y169 each contribute to the (3R)-3-methyl-D-ornithine site. S-adenosyl-L-methionine contacts are provided by E171, R182, and R190. R235 provides a ligand contact to (3R)-3-methyl-D-ornithine. Positions 240 and 242 each coordinate S-adenosyl-L-methionine. 3 residues coordinate (3R)-3-methyl-D-ornithine: S277, T298, and S299.

Belongs to the radical SAM superfamily. PylB family. It depends on [4Fe-4S] cluster as a cofactor. The cofactor is S-adenosyl-L-methionine.

It catalyses the reaction L-lysine = (3R)-3-methyl-D-ornithine. Its pathway is amino-acid biosynthesis; L-pyrrolysine biosynthesis. Functionally, catalyzes the isomerization of L-lysine to (3R)-3-methyl-D-ornithine via a radical-based mechanism, a step in the biosynthesis pathway of pyrrolysine. Also catalyzes the reverse reaction in vitro, converting (3R)-3-methyl-D-ornithine into L-lysine. The sequence is that of 3-methylornithine synthase from Methanosarcina barkeri (strain Fusaro / DSM 804).